A 568-amino-acid polypeptide reads, in one-letter code: Periplasmic trehalase (568 aa).

A signal peptide spans M1–A38. Residues R169, W176–D177, N213, R222–Q224, R294–E296, and G327 contribute to the substrate site. Residues D329 and E511 each act as proton donor/acceptor in the active site. E526 serves as a coordination point for substrate.

Belongs to the glycosyl hydrolase 37 family.

The protein localises to the periplasm. It catalyses the reaction alpha,alpha-trehalose + H2O = alpha-D-glucose + beta-D-glucose. Functionally, provides the cells with the ability to utilize trehalose at high osmolarity by splitting it into glucose molecules that can subsequently be taken up by the phosphotransferase-mediated uptake system. In Xanthomonas campestris pv. campestris (strain B100), this protein is Periplasmic trehalase.